A 263-amino-acid polypeptide reads, in one-letter code: Virulence plasmid protein pGP6-D-related protein (263 aa).

Belongs to the UPF0137 (pGP6-D) family.

The polypeptide is Virulence plasmid protein pGP6-D-related protein (Chlamydia trachomatis serovar D (strain ATCC VR-885 / DSM 19411 / UW-3/Cx)).